Reading from the N-terminus, the 183-residue chain is Thioredoxin-like protein CITRX, chloroplastic (183 aa).

A chloroplast-targeting transit peptide spans 1–81; it reads MALVQSRTFP…REDYLVKKLS (81 aa). One can recognise a Thioredoxin domain in the interval 82–183; the sequence is AQELQELVKG…MMHDIIDNEM (102 aa). Catalysis depends on nucleophile residues Cys-106 and Cys-109. Cys-106 and Cys-109 are oxidised to a cystine.

It belongs to the thioredoxin family. Plant CITRX-type subfamily. Interacts with FLN1 and FLN2. Interacts with MRL7.

The protein resides in the plastid. It is found in the chloroplast. Thiol-disulfide oxidoreductase that plays a role in proper chloroplast development, most likely through regulating plastid-encoded polymerase (PEP) dependent chloroplast transcription. Acts as a component of the transcriptionally active plastid chromosome that is required for plastid gene expression. The protein is Thioredoxin-like protein CITRX, chloroplastic of Arabidopsis thaliana (Mouse-ear cress).